A 265-amino-acid polypeptide reads, in one-letter code: Triosephosphate isomerase (265 aa).

13–15 is a binding site for substrate; it reads NWK. The active-site Electrophile is His-106. Glu-179 serves as the catalytic Proton acceptor. Substrate-binding positions include Gly-185, Ser-223, and 244 to 245; that span reads GG.

The protein belongs to the triosephosphate isomerase family. Homodimer.

It is found in the cytoplasm. It carries out the reaction D-glyceraldehyde 3-phosphate = dihydroxyacetone phosphate. It participates in carbohydrate biosynthesis; gluconeogenesis. The protein operates within carbohydrate degradation; glycolysis; D-glyceraldehyde 3-phosphate from glycerone phosphate: step 1/1. Functionally, involved in the gluconeogenesis. Catalyzes stereospecifically the conversion of dihydroxyacetone phosphate (DHAP) to D-glyceraldehyde-3-phosphate (G3P). In Acinetobacter baylyi (strain ATCC 33305 / BD413 / ADP1), this protein is Triosephosphate isomerase.